A 338-amino-acid polypeptide reads, in one-letter code: Short-chain dehydrogenase/reductase phmF (338 aa).

NADP(+) is bound by residues Leu46, Arg71, Asp96, and Asn123. The Proton donor role is filled by Ser177. Positions 211 and 215 each coordinate NADP(+). Tyr211 acts as the Proton acceptor in catalysis. Residue Lys215 is the Lowers pKa of active site Tyr of the active site.

This sequence belongs to the short-chain dehydrogenases/reductases (SDR) family.

The protein operates within mycotoxin biosynthesis. Short-chain dehydrogenase/reductase; part of the gene cluster that mediates the biosynthesis of the mycotoxins phomacins, leucine-derived cytochalasans with potent actin polymerization-inhibitory activities and monocot-specific antigerminative activities. The first step in the pathway is catalyzed by the hybrid PKS-NRPS phmA, assisted by the enoyl reductase phmE, that are responsible for fusion of the leucine precursor and the polyketide backbone to produce a 2-pyrrolidone intermediate. The polyketide synthase module (PKS) of phmA is responsible for the synthesis of the polyketide backbone and the downstream nonribosomal peptide synthetase (NRPS) amidates the carboxyl end of the polyketide with the leucine precursor. Because phmA lacks a designated enoylreductase (ER) domain, the required activity is provided the enoyl reductase phmE. Reduction by the hydrolyase phmG, followed by dehydration and intra-molecular Diels-Alder cyclization by the Diels-Alderase phmD then yield the required isoindolone-fused macrocycle. A number of oxidative steps catalyzed by the tailoring cytochrome P450 monooxygenase phmB, the FAD-linked oxidoreductase phmC and the short-chain dehydrogenase/reductase phmF, are further required to afford the final products, phomacin D and phomacin E. The polypeptide is Short-chain dehydrogenase/reductase phmF (Phaeosphaeria nodorum (strain SN15 / ATCC MYA-4574 / FGSC 10173) (Glume blotch fungus)).